The chain runs to 899 residues: Alanine--tRNA ligase, chloroplastic/mitochondrial (899 aa).

4 residues coordinate Zn(2+): histidine 581, histidine 585, cysteine 683, and histidine 687.

It belongs to the class-II aminoacyl-tRNA synthetase family. In terms of assembly, monomer. Zn(2+) serves as cofactor.

It localises to the plastid. The protein resides in the chloroplast. It is found in the mitochondrion. It catalyses the reaction tRNA(Ala) + L-alanine + ATP = L-alanyl-tRNA(Ala) + AMP + diphosphate. Its function is as follows. Catalyzes the attachment of alanine to tRNA(Ala) in a two-step reaction: alanine is first activated by ATP to form Ala-AMP and then transferred to the acceptor end of tRNA(Ala). Also edits incorrectly charged tRNA(Ala) via its editing domain. In Micromonas pusilla (strain CCMP1545) (Picoplanktonic green alga), this protein is Alanine--tRNA ligase, chloroplastic/mitochondrial.